Reading from the N-terminus, the 614-residue chain is Male-specific lethal 1 homolog (614 aa).

Disordered regions lie at residues 1–127 (MTMR…GCSP) and 147–217 (KEPT…GASS). Phosphoserine is present on residues Ser-66 and Ser-126. Positions 158–169 (GAASPAATASDP) are enriched in low complexity. Positions 170-184 (AGPPPLPLPGPPPLA) are enriched in pro residues. Low complexity predominate over residues 185-194 (PTATAGTLAA). Ser-205 carries the post-translational modification Phosphoserine. The stretch at 213 to 282 (SGASSQAACL…KDNEKERHKL (70 aa)) forms a coiled coil. An interaction with MSL2 region spans residues 223 to 237 (KQILLLQLDLIEQQQ). 2 stretches are compositionally biased toward basic and acidic residues: residues 272 to 281 (KKDNEKERHK) and 294 to 304 (TELSEKIKLEC). The interval 272–420 (KKDNEKERHK…PKEKAFSSEI (149 aa)) is disordered. A Glycyl lysine isopeptide (Lys-Gly) (interchain with G-Cter in SUMO2) cross-link involves residue Lys-301. The Nuclear localization signal motif lies at 317-346 (PKPFSCGRSGKGHKRKSPFGSTERKTPVKK). Lys-353 carries the N6-acetyllysine modification. Glycyl lysine isopeptide (Lys-Gly) (interchain with G-Cter in SUMO2) cross-links involve residues Lys-365 and Lys-378. The segment covering 376–392 (VCKRELRSQETPEKPRS) has biased composition (basic and acidic residues). Residue Ser-393 is modified to Phosphoserine. Polar residues predominate over residues 393–407 (SVDTPPRLSTPQKGP). Thr-396 carries the post-translational modification Phosphothreonine. Ser-442 carries the phosphoserine modification. The region spanning 472-591 (VLAVPSWRDH…LTPQNFELPW (120 aa)) is the PEHE domain. The interaction with KAT8 HAT domain stretch occupies residues 496–514 (ENLDDSVFSKRHAKLELDE). The Bipartite nuclear localization signal motif lies at 505–519 (KRHAKLELDEKRRKR). The interval 550-591 (EVTSFFPEPDDVESLMITPFLPVVAFGRPLPKLTPQNFELPW) is sufficient for interaction with MSL3 MRG domain.

The protein belongs to the msl-1 family. As to quaternary structure, component of a multisubunit histone acetyltransferase complex (MSL) at least composed of the KAT8/MOF/MYST1, MSL1/hampin, MSL2 and MSL3. Forms a MSL heterotetrameric core with MSL2. Interacts (via PEHE domain) with KAT8 (via HAT domain) and MSL3 (via MRG domain); both interactions are direct. Directly interacts with NUPR1. Interacts with TP53BP1; this interaction may be required for MSL1 DNA repair activity, but not for histone acetyltransferase activity. Interacts with TTC4, ECM2 and PIHD1. Sumoylated with SUMO1.

It is found in the nucleus. The protein resides in the nucleoplasm. It localises to the nucleus speckle. Its function is as follows. Non-catalytic component of the MSL histone acetyltransferase complex, a multiprotein complex that mediates the majority of histone H4 acetylation at 'Lys-16' (H4K16ac), an epigenetic mark that prevents chromatin compaction. The MSL complex is required for chromosome stability and genome integrity by maintaining homeostatic levels of H4K16ac. The MSL complex is also involved in gene dosage by promoting up-regulation of genes expressed by the X chromosome. X up-regulation is required to compensate for autosomal biallelic expression. The MSL complex also participates in gene dosage compensation by promoting expression of Tsix non-coding RNA. Within the MSL complex, acts as a scaffold to tether MSL3 and KAT8 together for enzymatic activity regulation. Greatly enhances MSL2 E3 ubiquitin ligase activity, promoting monoubiquitination of histone H2B at 'Lys-34' (H2BK34Ub). This modification in turn stimulates histone H3 methylation at 'Lys-4' (H3K4me) and 'Lys-79' (H3K79me) and leads to gene activation, including that of HOXA9 and MEIS1. In Homo sapiens (Human), this protein is Male-specific lethal 1 homolog.